A 545-amino-acid polypeptide reads, in one-letter code: Dual specificity calcium/calmodulin-dependent 3',5'-cyclic nucleotide phosphodiesterase 1A (545 aa).

Calmodulin-binding regions lie at residues 24 to 44 (TEKM…QLEK) and 114 to 137 (EKPK…MYRK). A PDEase domain is found at 142 to 522 (VGLTYPAAVI…ERWKELAAQG (381 aa)). The Proton donor role is filled by His219. 4 residues coordinate Zn(2+): His223, His259, Asp260, and Asp366. Asp260 is a Mg(2+) binding site. Residues 526 to 545 (LHKNSEELGNTEEKHADTRP) are disordered.

It belongs to the cyclic nucleotide phosphodiesterase family. PDE1 subfamily. Homodimer. Interacts with YWHAZ. Zn(2+) serves as cofactor. The cofactor is Mg(2+). Expressed in brain, kidney and testis.

It localises to the cell projection. The protein resides in the cilium. The protein localises to the flagellum. The enzyme catalyses a nucleoside 3',5'-cyclic phosphate + H2O = a nucleoside 5'-phosphate + H(+). It catalyses the reaction 3',5'-cyclic GMP + H2O = GMP + H(+). It carries out the reaction 3',5'-cyclic AMP + H2O = AMP + H(+). Type I PDE are activated by the binding of calmodulin in the presence of Ca(2+). Its activity is regulated as follows. Activated by the binding of calmodulin in the presence of Ca(2+). Its function is as follows. Calcium/calmodulin-dependent cyclic nucleotide phosphodiesterase with a dual specificity for the second messengers cGMP and cAMP, which are key regulators of many important physiological processes. Has a higher efficiency with cGMP compared to cAMP. The sequence is that of Dual specificity calcium/calmodulin-dependent 3',5'-cyclic nucleotide phosphodiesterase 1A from Mus musculus (Mouse).